Consider the following 264-residue polypeptide: Aminoglycoside 3'-phosphotransferase (264 aa).

Catalysis depends on Asp-190, which acts as the Proton acceptor.

It belongs to the aminoglycoside phosphotransferase family.

It carries out the reaction kanamycin A + ATP = kanamycin 3'-phosphate + ADP + H(+). Functionally, resistance to kanamycin and structurally-related aminoglycosides, including amikacin. This chain is Aminoglycoside 3'-phosphotransferase (aphA), found in Enterococcus faecalis (Streptococcus faecalis).